We begin with the raw amino-acid sequence, 337 residues long: tRNA N6-adenosine threonylcarbamoyltransferase (337 aa).

Positions 114 and 118 each coordinate Fe cation. Substrate contacts are provided by residues 136–140 (LVSGG), aspartate 169, glycine 182, aspartate 186, and asparagine 275. Fe cation is bound at residue aspartate 301.

Belongs to the KAE1 / TsaD family. Requires Fe(2+) as cofactor.

The protein localises to the cytoplasm. The catalysed reaction is L-threonylcarbamoyladenylate + adenosine(37) in tRNA = N(6)-L-threonylcarbamoyladenosine(37) in tRNA + AMP + H(+). Required for the formation of a threonylcarbamoyl group on adenosine at position 37 (t(6)A37) in tRNAs that read codons beginning with adenine. Is involved in the transfer of the threonylcarbamoyl moiety of threonylcarbamoyl-AMP (TC-AMP) to the N6 group of A37, together with TsaE and TsaB. TsaD likely plays a direct catalytic role in this reaction. This chain is tRNA N6-adenosine threonylcarbamoyltransferase, found in Streptococcus uberis (strain ATCC BAA-854 / 0140J).